The following is a 310-amino-acid chain: Cytosolic Fe-S cluster assembly factor NUBP1 homolog (310 aa).

[4Fe-4S] cluster-binding residues include Cys12, Cys26, Cys29, and Cys35. An ATP-binding site is contributed by Gly66 to Ser73. Residues Cys240 and Cys243 each coordinate [4Fe-4S] cluster.

Belongs to the Mrp/NBP35 ATP-binding proteins family. NUBP1/NBP35 subfamily. As to quaternary structure, heterotetramer of 2 NUBP1 and 2 NUBP2 chains. Requires [4Fe-4S] cluster as cofactor.

The protein localises to the cytoplasm. In terms of biological role, component of the cytosolic iron-sulfur (Fe/S) protein assembly (CIA) machinery. Required for maturation of extramitochondrial Fe-S proteins. The NUBP1-NUBP2 heterotetramer forms a Fe-S scaffold complex, mediating the de novo assembly of an Fe-S cluster and its transfer to target apoproteins. The polypeptide is Cytosolic Fe-S cluster assembly factor NUBP1 homolog (Brugia malayi (Filarial nematode worm)).